Reading from the N-terminus, the 619-residue chain is Dihydroxy-acid dehydratase (619 aa).

Residue D81 participates in Mg(2+) binding. C122 serves as a coordination point for [2Fe-2S] cluster. The Mg(2+) site is built by D123 and K124. At K124 the chain carries N6-carboxylysine. Residue C195 coordinates [2Fe-2S] cluster. Position 494 (E494) interacts with Mg(2+). S520 functions as the Proton acceptor in the catalytic mechanism.

Belongs to the IlvD/Edd family. Homodimer. [2Fe-2S] cluster is required as a cofactor. Mg(2+) serves as cofactor.

The catalysed reaction is (2R)-2,3-dihydroxy-3-methylbutanoate = 3-methyl-2-oxobutanoate + H2O. It catalyses the reaction (2R,3R)-2,3-dihydroxy-3-methylpentanoate = (S)-3-methyl-2-oxopentanoate + H2O. Its pathway is amino-acid biosynthesis; L-isoleucine biosynthesis; L-isoleucine from 2-oxobutanoate: step 3/4. It functions in the pathway amino-acid biosynthesis; L-valine biosynthesis; L-valine from pyruvate: step 3/4. Its function is as follows. Functions in the biosynthesis of branched-chain amino acids. Catalyzes the dehydration of (2R,3R)-2,3-dihydroxy-3-methylpentanoate (2,3-dihydroxy-3-methylvalerate) into 2-oxo-3-methylpentanoate (2-oxo-3-methylvalerate) and of (2R)-2,3-dihydroxy-3-methylbutanoate (2,3-dihydroxyisovalerate) into 2-oxo-3-methylbutanoate (2-oxoisovalerate), the penultimate precursor to L-isoleucine and L-valine, respectively. This Shewanella sp. (strain ANA-3) protein is Dihydroxy-acid dehydratase.